A 334-amino-acid chain; its full sequence is Tryptophan--tRNA ligase (334 aa).

Residues 11 to 13 and 19 to 20 each bind ATP; these read QPS and GN. The short motif at 12-20 is the 'HIGH' region element; that stretch reads PSGELTIGN. L-tryptophan is bound at residue Asp135. ATP contacts are provided by residues 147-149, Val186, and 195-199; these read GED and KMSKS. The short motif at 195–199 is the 'KMSKS' region element; it reads KMSKS.

It belongs to the class-I aminoacyl-tRNA synthetase family. In terms of assembly, homodimer.

It localises to the cytoplasm. The catalysed reaction is tRNA(Trp) + L-tryptophan + ATP = L-tryptophyl-tRNA(Trp) + AMP + diphosphate + H(+). Its function is as follows. Catalyzes the attachment of tryptophan to tRNA(Trp). The chain is Tryptophan--tRNA ligase from Escherichia coli O157:H7.